Reading from the N-terminus, the 250-residue chain is 5-oxoprolinase subunit A (250 aa).

Belongs to the LamB/PxpA family. Forms a complex composed of PxpA, PxpB and PxpC.

The catalysed reaction is 5-oxo-L-proline + ATP + 2 H2O = L-glutamate + ADP + phosphate + H(+). In terms of biological role, catalyzes the cleavage of 5-oxoproline to form L-glutamate coupled to the hydrolysis of ATP to ADP and inorganic phosphate. This chain is 5-oxoprolinase subunit A, found in Staphylococcus haemolyticus (strain JCSC1435).